The following is a 792-amino-acid chain: MDLNQRKEKKGQHVGCCGSRTDLSADTVELIERMDRLAENQATASMSIVALPSSFQESNSSDRCRKYCSSDEDSDTCIHGSANASTNATTNSSTNATTTASINVRTSATTTASINVRTSATTTESTNSNTNATTTESTNSSTNATTTASINVRTSATTTESTNSSTNATTTASINVRTSATTTESTNSSTNATTTASINVRTSATTTESTNSNTNASTNATTNSSTNATTTASTNVRTSATTNATTNSSTNATTTASTNVRTSATTTASTNVRTSATTTASINVRTSATTTESINSSTNATTTESTNSNTSATTTESTDSNTNATTTASINVRTSATTTESTNSNTSATTTESTDSNTSATTTASTNSSTNATTTASTNSSTNATTTESTNASAKEDANKDGNAEDNRFHPVTDINKESYKRKGSQMVFLERKKLKAQFPNTSENMNVLQFLGFRSDEIKHLFLYGIDIYFCPEGVFTQYGLCKGCQKMFGLCVCWAGQKVSYRRIAWEALAVERMLRNDEEYKEYLEDIEPYHGDPVGYLKYFSVKRREIYSQIQRNYAWYLAITRRRETISVLDSTRGKQGSQVFRMSGRQIKELYYKVWSNLRESKTEVLQYFLNWDEKKCREEWEAKDDTVFVEALEKVGVFQRLRSMTSAGLQGPQYVKLQFSRHHRQLRSRYELSLGMHLRDQLALGVTPSKVPHWTAFLSMLIGLFYNKTFRQKLEYLLEQISEMWLLPHWLDLANVEVLAADNTRVPLYMLMVAVHKELDSDDVPDGRFDIILLCRDSSREVGE.

A run of 25 repeats spans residues 91 to 102 (NSSTNATTTASI), 103 to 114 (NVRTSATTTASI), 115 to 126 (NVRTSATTTEST), 127 to 138 (NSNTNATTTEST), 139 to 150 (NSSTNATTTASI), 151 to 162 (NVRTSATTTEST), 163 to 174 (NSSTNATTTASI), 175 to 186 (NVRTSATTTEST), 187 to 198 (NSSTNATTTASI), 199 to 210 (NVRTSATTTEST), 211 to 222 (NSNTNASTNATT), 223 to 234 (NSSTNATTTAST), 235 to 246 (NVRTSATTNATT), 247 to 258 (NSSTNATTTAST), 259 to 270 (NVRTSATTTAST), 271 to 282 (NVRTSATTTASI), 283 to 294 (NVRTSATTTESI), 295 to 306 (NSSTNATTTEST), 307 to 318 (NSNTSATTTEST), 319 to 330 (DSNTNATTTASI), 331 to 342 (NVRTSATTTEST), 343 to 354 (NSNTSATTTEST), 355 to 366 (DSNTSATTTAST), 367 to 378 (NSSTNATTTAST), and 379 to 390 (NSSTNATTTEST). The tract at residues 91–390 (NSSTNATTTA…STNATTTEST (300 aa)) is 25 X 12 AA tandem repeat of N-[SV]-[RS]-T-[NS]-A-T-T-T-[AE]-[ST]-[IT]. Residues 113–417 (SINVRTSATT…RFHPVTDINK (305 aa)) form a disordered region. The span at 118-393 (TSATTTESTN…ATTTESTNAS (276 aa)) shows a compositional bias: low complexity. The segment covering 394-417 (AKEDANKDGNAEDNRFHPVTDINK) has biased composition (basic and acidic residues).

This is an uncharacterized protein from Saccharomyces cerevisiae (strain ATCC 204508 / S288c) (Baker's yeast).